We begin with the raw amino-acid sequence, 398 residues long: Lysophospholipid transporter LplT (398 aa).

12 consecutive transmembrane segments (helical) span residues 16-36, 53-73, 91-111, 139-159, 163-183, 195-213, 227-247, 253-273, 286-306, 310-330, 344-364, and 372-392; these read MIAV…LLFA, ILQM…GQVA, AGAL…LVGV, LMEA…GILA, IVAA…ANLY, SWTP…VVLW, LFWG…PVAL, ATPT…AGAA, MPAG…TTLF, ALLL…NALL, IAVQ…LYSL, and VVGV…ALWL.

It belongs to the major facilitator superfamily. LplT (TC 2.A.1.42) family.

The protein localises to the cell inner membrane. Functionally, catalyzes the facilitated diffusion of 2-acyl-glycero-3-phosphoethanolamine (2-acyl-GPE) into the cell. The protein is Lysophospholipid transporter LplT of Serratia proteamaculans (strain 568).